We begin with the raw amino-acid sequence, 287 residues long: Homoserine kinase (287 aa).

Residue 78–88 coordinates ATP; that stretch reads PLAHGLGSSSS.

Belongs to the GHMP kinase family. Homoserine kinase subfamily.

It localises to the cytoplasm. The enzyme catalyses L-homoserine + ATP = O-phospho-L-homoserine + ADP + H(+). It functions in the pathway amino-acid biosynthesis; L-threonine biosynthesis; L-threonine from L-aspartate: step 4/5. Its function is as follows. Catalyzes the ATP-dependent phosphorylation of L-homoserine to L-homoserine phosphate. This chain is Homoserine kinase, found in Lactobacillus acidophilus (strain ATCC 700396 / NCK56 / N2 / NCFM).